Consider the following 229-residue polypeptide: Large ribosomal subunit protein uL1 (229 aa).

The protein belongs to the universal ribosomal protein uL1 family. Part of the 50S ribosomal subunit.

In terms of biological role, binds directly to 23S rRNA. The L1 stalk is quite mobile in the ribosome, and is involved in E site tRNA release. Its function is as follows. Protein L1 is also a translational repressor protein, it controls the translation of the L11 operon by binding to its mRNA. This chain is Large ribosomal subunit protein uL1, found in Caulobacter sp. (strain K31).